Reading from the N-terminus, the 331-residue chain is UDP-N-acetylenolpyruvoylglucosamine reductase (331 aa).

The 168-residue stretch at 54–221 (RVGGAAELYV…TQATFQLQPG (168 aa)) folds into the FAD-binding PCMH-type domain. Arg200 is an active-site residue. Catalysis depends on Ser251, which acts as the Proton donor. The active site involves Glu321.

It belongs to the MurB family. FAD serves as cofactor.

The protein localises to the cytoplasm. The enzyme catalyses UDP-N-acetyl-alpha-D-muramate + NADP(+) = UDP-N-acetyl-3-O-(1-carboxyvinyl)-alpha-D-glucosamine + NADPH + H(+). It functions in the pathway cell wall biogenesis; peptidoglycan biosynthesis. In terms of biological role, cell wall formation. The sequence is that of UDP-N-acetylenolpyruvoylglucosamine reductase from Nostoc sp. (strain PCC 7120 / SAG 25.82 / UTEX 2576).